The chain runs to 132 residues: DNA-binding protein inhibitor ID-2 (132 aa).

The region spanning 23–75 (ARSKTPVDDPMSLLYNMNDCYSKLKELVPSIPQNKKVSKMEILQHVIDYILDL) is the bHLH domain. The short motif at 105-114 (LNTDISILSL) is the Nuclear export signal element.

In terms of assembly, heterodimer with other HLH proteins.

Its subcellular location is the cytoplasm. The protein localises to the nucleus. Transcriptional regulator (lacking a basic DNA binding domain) which negatively regulates the basic helix-loop-helix (bHLH) transcription factors by forming heterodimers and inhibiting their DNA binding and transcriptional activity. Inhibits the activity of both neurogenic (neurod1/neuroD) and myogenic (myod1/myoD) bHLH factors. May play a role in the regulation of the circadian clock. The chain is DNA-binding protein inhibitor ID-2 from Xenopus tropicalis (Western clawed frog).